A 233-amino-acid polypeptide reads, in one-letter code: Histidinol dehydrogenase (233 aa).

Positions 31, 53, and 56 each coordinate substrate. Residues Q53 and H56 each contribute to the Zn(2+) site. Residues E121 and H122 each act as proton acceptor in the active site. Substrate contacts are provided by H122, D155, E209, and H214. D155 provides a ligand contact to Zn(2+). H214 contacts Zn(2+).

It belongs to the histidinol dehydrogenase family. Zn(2+) is required as a cofactor.

The enzyme catalyses L-histidinol + 2 NAD(+) + H2O = L-histidine + 2 NADH + 3 H(+). Its pathway is amino-acid biosynthesis; L-histidine biosynthesis; L-histidine from 5-phospho-alpha-D-ribose 1-diphosphate: step 9/9. Its function is as follows. Catalyzes the sequential NAD-dependent oxidations of L-histidinol to L-histidinaldehyde and then to L-histidine. This Thiocapsa roseopersicina protein is Histidinol dehydrogenase (hisD).